The chain runs to 185 residues: MELVVTSRETGKKSFLKKIRQQGGIPAVVYSAGKSLANITVDALVFKKFLSNLESGALSSTVFSLSYEGRIIKALVKDIQYQITTYDVIHLDFEELVEDRPVKLNIPIRCINAVDCIGVKLGGSLRQVIRAVRVVCKPKDIVPFLELDVRSVGLSQTRKLSDIKIPAGIETITPLKEVAITVSRR.

The protein belongs to the bacterial ribosomal protein bL25 family. CTC subfamily. In terms of assembly, part of the 50S ribosomal subunit; part of the 5S rRNA/L5/L18/L25 subcomplex. Contacts the 5S rRNA. Binds to the 5S rRNA independently of L5 and L18.

This is one of the proteins that binds to the 5S RNA in the ribosome where it forms part of the central protuberance. This Chlamydia pneumoniae (Chlamydophila pneumoniae) protein is Large ribosomal subunit protein bL25.